The chain runs to 247 residues: Mycofactocin precursor peptide peptidase (247 aa).

Positions 38, 40, 49, 124, and 163 each coordinate a divalent metal cation.

The protein belongs to the creatininase superfamily. As to quaternary structure, homooctamer. Fe(2+) serves as cofactor. Zn(2+) is required as a cofactor.

The catalysed reaction is [mycofactocin precursor peptide]-C-terminal glycyl-N-{5-[(4-hydroxyphenyl)methyl]-4,4-dimethyl-2-oxopyrrolidin-3-yl}acetamide + H2O = [mycofactocin precursor peptide]-C-terminal glycine + 3-amino-5-[(4-hydroxyphenyl)methyl]-4,4-dimethyl-2-pyrrolidin-2-one. Functionally, peptidase involved in the biosynthesis of the enzyme cofactor mycofactocin (MFT). Catalyzes cleavage of the MftC-modified MftA peptide to liberate its final two residues, which consist of a cross-linked valine-decarboxylated tyrosine dipeptide (named 3-amino-5-[(4-hydroxyphenyl)methyl]-4,4-dimethyl-2-pyrrolidin-2-one or ADHP). Is required for the in vivo ethanol assimilation in M.smegmatis. This chain is Mycofactocin precursor peptide peptidase, found in Mycolicibacterium smegmatis (strain ATCC 700084 / mc(2)155) (Mycobacterium smegmatis).